The sequence spans 104 residues: ATP synthase subunit c (104 aa).

The next 2 helical transmembrane spans lie at 31–51 (SVVA…IGMG) and 75–95 (MFIA…VAMI).

This sequence belongs to the ATPase C chain family. In terms of assembly, F-type ATPases have 2 components, F(1) - the catalytic core - and F(0) - the membrane proton channel. F(1) has five subunits: alpha(3), beta(3), gamma(1), delta(1), epsilon(1). F(0) has three main subunits: a(1), b(2) and c(10-14). The alpha and beta chains form an alternating ring which encloses part of the gamma chain. F(1) is attached to F(0) by a central stalk formed by the gamma and epsilon chains, while a peripheral stalk is formed by the delta and b chains.

The protein localises to the cell inner membrane. In terms of biological role, f(1)F(0) ATP synthase produces ATP from ADP in the presence of a proton or sodium gradient. F-type ATPases consist of two structural domains, F(1) containing the extramembraneous catalytic core and F(0) containing the membrane proton channel, linked together by a central stalk and a peripheral stalk. During catalysis, ATP synthesis in the catalytic domain of F(1) is coupled via a rotary mechanism of the central stalk subunits to proton translocation. Its function is as follows. Key component of the F(0) channel; it plays a direct role in translocation across the membrane. A homomeric c-ring of between 10-14 subunits forms the central stalk rotor element with the F(1) delta and epsilon subunits. The polypeptide is ATP synthase subunit c (Aliarcobacter butzleri (strain RM4018) (Arcobacter butzleri)).